We begin with the raw amino-acid sequence, 197 residues long: Negative modulator of initiation of replication (197 aa).

Interaction with DNA stretches follow at residues 100 to 101, 129 to 133, and 163 to 169; these read AV, RTRVY, and NTNSGRK.

The protein belongs to the SeqA family. Homodimer. Polymerizes to form helical filaments.

It is found in the cytoplasm. Negative regulator of replication initiation, which contributes to regulation of DNA replication and ensures that replication initiation occurs exactly once per chromosome per cell cycle. Binds to pairs of hemimethylated GATC sequences in the oriC region, thus preventing assembly of replication proteins and re-initiation at newly replicated origins. Repression is relieved when the region becomes fully methylated. The sequence is that of Negative modulator of initiation of replication from Haemophilus influenzae (strain ATCC 51907 / DSM 11121 / KW20 / Rd).